Reading from the N-terminus, the 295-residue chain is Bifunctional protein FolD (295 aa).

Residues 167–169 (GRS), serine 192, and isoleucine 233 contribute to the NADP(+) site.

This sequence belongs to the tetrahydrofolate dehydrogenase/cyclohydrolase family. Homodimer.

It carries out the reaction (6R)-5,10-methylene-5,6,7,8-tetrahydrofolate + NADP(+) = (6R)-5,10-methenyltetrahydrofolate + NADPH. It catalyses the reaction (6R)-5,10-methenyltetrahydrofolate + H2O = (6R)-10-formyltetrahydrofolate + H(+). The protein operates within one-carbon metabolism; tetrahydrofolate interconversion. In terms of biological role, catalyzes the oxidation of 5,10-methylenetetrahydrofolate to 5,10-methenyltetrahydrofolate and then the hydrolysis of 5,10-methenyltetrahydrofolate to 10-formyltetrahydrofolate. This Paramagnetospirillum magneticum (strain ATCC 700264 / AMB-1) (Magnetospirillum magneticum) protein is Bifunctional protein FolD.